Here is a 1478-residue protein sequence, read N- to C-terminus: Zinc finger protein 518A (1478 aa).

4 C2H2-type zinc fingers span residues Phe-152 to His-174, Phe-209 to His-231, Tyr-236 to His-258, and Phe-264 to His-287. The interval Thr-355–Leu-394 is disordered. Lys-358 participates in a covalent cross-link: Glycyl lysine isopeptide (Lys-Gly) (interchain with G-Cter in SUMO2). A compositionally biased stretch (basic and acidic residues) spans Asn-368–Ser-388. Glycyl lysine isopeptide (Lys-Gly) (interchain with G-Cter in SUMO2) cross-links involve residues Lys-390 and Lys-428. Residues Pro-464–Ala-484 form a disordered region. Lys-518 is covalently cross-linked (Glycyl lysine isopeptide (Lys-Gly) (interchain with G-Cter in SUMO2)). Ser-652 is modified (phosphoserine). The segment at Val-656 to Leu-694 is disordered. A compositionally biased stretch (low complexity) spans Thr-670 to Ser-681. Glycyl lysine isopeptide (Lys-Gly) (interchain with G-Cter in SUMO2) cross-links involve residues Lys-707, Lys-792, Lys-882, Lys-895, Lys-987, Lys-1008, Lys-1041, Lys-1055, Lys-1078, Lys-1180, and Lys-1441. Residues Phe-1444–His-1466 form a C2H2-type 5 zinc finger.

The protein belongs to the krueppel C2H2-type zinc-finger protein family.

It localises to the nucleus. Its function is as follows. Through its association with the EHMT1-EHMT2/G9A and PRC2/EED-EZH2 histone methyltransferase complexes may function in gene silencing, regulating repressive post-translational methylation of histone tails at promoters of target genes. In Rattus norvegicus (Rat), this protein is Zinc finger protein 518A (Znf518a).